A 782-amino-acid chain; its full sequence is General transcription and DNA repair factor IIH helicase/translocase subunit XPB (782 aa).

The segment covering 1 to 11 (MGRKDKSDREK) has biased composition (basic and acidic residues). 2 disordered regions span residues 1-47 (MGRK…VDES) and 211-242 (TISSKSAISKSQQDNGGPSSSQPADGQRSGTQ). Residues 6–17 (KSDREKKSKKRY) carry the Nuclear localization signal motif. Positions 19 to 28 (EDEEEDEEVI) are enriched in acidic residues. The segment covering 211–223 (TISSKSAISKSQQ) has biased composition (low complexity). Positions 224–242 (DNGGPSSSQPADGQRSGTQ) are enriched in polar residues. In terms of domain architecture, Helicase ATP-binding spans 326–487 (MFGNGRARSG…DLNFLIGPKL (162 aa)). ATP is bound at residue 339–346 (LPCGAGKS). A DEVH box motif is present at residues 440–443 (DEVH). The Helicase C-terminal domain maps to 541-701 (RACQFLIRFH…LAGMEEEDLM (161 aa)).

The protein belongs to the helicase family. RAD25/XPB subfamily. As to quaternary structure, component of the 7-subunit TFIIH core complex composed of XPB/ERCC3, XPD/ERCC2, GTF2H1, GTF2H2, GTF2H3, GTF2H4 and GTF2H5, which is active in NER. The core complex associates with the 3-subunit CDK-activating kinase (CAK) module composed of CCNH/cyclin H, CDK7 and MNAT1 to form the 10-subunit holoenzyme (holo-TFIIH) active in transcription. Interacts with PUF60. Interacts with ATF7IP. Interacts with Epstein-Barr virus EBNA2.

The protein localises to the nucleus. The catalysed reaction is Couples ATP hydrolysis with the unwinding of duplex DNA by translocating in the 3'-5' direction.. The enzyme catalyses ATP + H2O = ADP + phosphate + H(+). Its function is as follows. ATP-dependent 3'-5' DNA helicase/translocase; binds dsDNA rather than ssDNA, unzipping it in a translocase rather than classical helicase activity. Component of the general transcription and DNA repair factor IIH (TFIIH) core complex. When complexed to CDK-activating kinase (CAK), involved in RNA transcription by RNA polymerase II. The ATPase activity of XPB/ERCC3, but not its helicase activity, is required for DNA opening; it may wrap around the damaged DNA wedging it open, causing localized melting and twisting that allows XPD/ERCC2 helicase to anchor. The ATP-dependent helicase activity of XPB/ERCC3 may be required for promoter escape. Also involved in transcription-coupled nucleotide excision repair (NER) of damaged DNA. In NER, TFIIH acts by opening DNA around the lesion to allow the excision of the damaged oligonucleotide and its replacement by a new DNA fragment. This is General transcription and DNA repair factor IIH helicase/translocase subunit XPB (ercc3) from Danio rerio (Zebrafish).